The sequence spans 337 residues: Protein XAP5 CIRCADIAN TIMEKEEPER (337 aa).

Serine 2 carries the post-translational modification N-acetylserine. Coiled-coil stretches lie at residues 13–41 (QDAV…KSAS) and 72–121 (TREE…GSSR). A compositionally biased stretch (basic and acidic residues) spans 23-37 (KQREAERKKIQELKS). Positions 23–47 (KQREAERKKIQELKSKSASGNDQSG) are disordered. A compositionally biased stretch (polar residues) spans 38–47 (KSASGNDQSG). The segment at 125-174 (AEDFENGSDEDDGENKSSGTGNLRCGKLGKDPSVETNFLPDSEREAEEQA) is disordered. The span at 126–137 (EDFENGSDEDDG) shows a compositional bias: acidic residues. Position 132 is a phosphoserine (serine 132). The span at 165-174 (DSEREAEEQA) shows a compositional bias: basic and acidic residues.

Belongs to the FAM50 family. As to expression, expressed in leaves stems, flowers, roots, trichomes and hypocotyls.

It localises to the nucleus. Its function is as follows. Involved in light regulation of the circadian clock and photomorphogenesis. May play a global role in coordinating growth in response to the light environment. Acts as a light quality sensor directing both negative and positive transcriptional regulation. Inhibits growth in red light but promote growth in blue light. Inhibits clock gene expression in diurnal cycles. Plays no role in the control of flowering time. This is Protein XAP5 CIRCADIAN TIMEKEEPER (XCT) from Arabidopsis thaliana (Mouse-ear cress).